A 338-amino-acid polypeptide reads, in one-letter code: Fructose-1,6-bisphosphatase class 1 (338 aa).

Positions 92, 114, 116, and 117 each coordinate Mg(2+). Substrate is bound by residues 117 to 120 (DGSS), Asn-210, Tyr-243, and Lys-276. Glu-282 contacts Mg(2+).

The protein belongs to the FBPase class 1 family. Homotetramer. It depends on Mg(2+) as a cofactor.

Its subcellular location is the cytoplasm. The enzyme catalyses beta-D-fructose 1,6-bisphosphate + H2O = beta-D-fructose 6-phosphate + phosphate. Its pathway is carbohydrate biosynthesis; gluconeogenesis. This is Fructose-1,6-bisphosphatase class 1 from Maridesulfovibrio salexigens (strain ATCC 14822 / DSM 2638 / NCIMB 8403 / VKM B-1763) (Desulfovibrio salexigens).